An 87-amino-acid polypeptide reads, in one-letter code: Large ribosomal subunit protein bL27c (87 aa).

The disordered stretch occupies residues 1-20 (MAHKKGSGSTKNGRDSRSQR).

The protein belongs to the bacterial ribosomal protein bL27 family.

The protein resides in the plastid. It is found in the chloroplast. This chain is Large ribosomal subunit protein bL27c, found in Gracilaria tenuistipitata var. liui (Red alga).